Here is a 450-residue protein sequence, read N- to C-terminus: ATP-dependent protease ATPase subunit HslU (450 aa).

ATP-binding positions include Val29, 71–76 (GVGKTE), Asp261, Glu328, and Arg400.

It belongs to the ClpX chaperone family. HslU subfamily. In terms of assembly, a double ring-shaped homohexamer of HslV is capped on each side by a ring-shaped HslU homohexamer. The assembly of the HslU/HslV complex is dependent on binding of ATP.

It is found in the cytoplasm. Its function is as follows. ATPase subunit of a proteasome-like degradation complex; this subunit has chaperone activity. The binding of ATP and its subsequent hydrolysis by HslU are essential for unfolding of protein substrates subsequently hydrolyzed by HslV. HslU recognizes the N-terminal part of its protein substrates and unfolds these before they are guided to HslV for hydrolysis. The sequence is that of ATP-dependent protease ATPase subunit HslU from Rickettsia conorii (strain ATCC VR-613 / Malish 7).